A 146-amino-acid chain; its full sequence is NADH-quinone oxidoreductase subunit A (146 aa).

The next 3 helical transmembrane spans lie at Phe14–Leu34, Leu68–Val88, and Ile96–Val116.

The protein belongs to the complex I subunit 3 family. As to quaternary structure, NDH-1 is composed of 13 different subunits. Subunits NuoA, H, J, K, L, M, N constitute the membrane sector of the complex.

Its subcellular location is the cell inner membrane. The catalysed reaction is a quinone + NADH + 5 H(+)(in) = a quinol + NAD(+) + 4 H(+)(out). Its function is as follows. NDH-1 shuttles electrons from NADH, via FMN and iron-sulfur (Fe-S) centers, to quinones in the respiratory chain. The immediate electron acceptor for the enzyme in this species is believed to be ubiquinone. Couples the redox reaction to proton translocation (for every two electrons transferred, four hydrogen ions are translocated across the cytoplasmic membrane), and thus conserves the redox energy in a proton gradient. This is NADH-quinone oxidoreductase subunit A from Pectobacterium carotovorum subsp. carotovorum (Erwinia carotovora subsp. carotovora).